The sequence spans 486 residues: Endoglucanase 16 (486 aa).

The signal sequence occupies residues 1–30 (MANYKGRGNVMIRSMLLGLYGIINIVCVNG). Asparagine 29 is a glycosylation site (N-linked (GlcNAc...) asparagine). Residue aspartate 87 is the Nucleophile of the active site. Active-site residues include histidine 407, aspartate 458, and glutamate 467.

It belongs to the glycosyl hydrolase 9 (cellulase E) family.

It localises to the secreted. The enzyme catalyses Endohydrolysis of (1-&gt;4)-beta-D-glucosidic linkages in cellulose, lichenin and cereal beta-D-glucans.. This Arabidopsis thaliana (Mouse-ear cress) protein is Endoglucanase 16.